Here is a 381-residue protein sequence, read N- to C-terminus: Trans-enoyl reductase iliB (381 aa).

50 to 53 contacts NADP(+); sequence VDGK. 145 to 152 lines the substrate pocket; that stretch reads ATLATVGL. NADP(+) contacts are provided by residues 213–216, Y231, and 278–279; these read SPGS and LD. 298-302 is a substrate binding site; sequence TYTQF. 367-368 is an NADP(+) binding site; sequence IS.

It belongs to the zinc-containing alcohol dehydrogenase family. In terms of assembly, monomer.

It catalyses the reaction N-[(4E,6E,10S,12Z,14E)-6,10-dimethyl-3-oxohexadeca-4,6,12,14-tetraenoyl]-L-tyrosyl-[ACP] = (3E,5S)-3-[(2E,4E,8S,10E,12Z)-1-hydroxy-4,8-dimethyltetradeca-2,4,10,12-tetraen-1-ylidene]-5-[(4-hydroxyphenyl)methyl]pyrrolidine-2,4-dione + holo-[ACP] + H(+). Its pathway is mycotoxin biosynthesis. In terms of biological role, trans-enoyl reductase; part of the gene cluster that mediates the biosynthesis of ilicicolin H, a 4-hydroxy-2-pyridonealkaloid that has potent and broad antifungal activities by inhibiting the mitochondrial respiration chain. IliB collaborates with the hybrid PKS-NRPS synthetase iliA to assemble the backbone of ilicicolin H. The PKS portion of iliA and trans-acting enoyl reductase iliB work together to construct an octaketide, and two methyl groups are introduced by the MT domain of iliA during the chain assembly. The nascent chain is then condensed with tyrosine, catalyzed by the iliA C domain, and the resulting PKS-NRPS hybrid is offloaded by the iliA RED domain to form an advanced tetramic acid intermediate. The biosynthesis of ilicicolin H starts with formation of the tetramic acid by the hybrid PKS-NRPS synthetase iliA with the partnering trans-enoyl reductase iliB since iliA lacks a designated enoylreductase (ER) domain. The cytochrome P450 monooxygenase iliC then catalyzes the ring expansion of the tetramate to the acyclic 2-pyridone. The pericyclase iliD further converts the acyclic 2-pyridone into 8-epi-ilicicolin H. 8-epi-ilicicolin H might then spontaneously convert to ilicicolin H since ilicicolin H is produced in the absence of the epimerase iliE, in contrast to what was observed for the Talaromyces variabilis ilicolin H biosynthetic pathway. This chain is Trans-enoyl reductase iliB, found in Neonectria sp. (strain DH2).